Here is a 168-residue protein sequence, read N- to C-terminus: Small ribosomal subunit protein uS5 (168 aa).

The 64-residue stretch at 13–76 folds into the S5 DRBM domain; the sequence is LEENVVAINR…EDAKRKLITV (64 aa).

This sequence belongs to the universal ribosomal protein uS5 family. In terms of assembly, part of the 30S ribosomal subunit. Contacts proteins S4 and S8.

In terms of biological role, with S4 and S12 plays an important role in translational accuracy. Functionally, located at the back of the 30S subunit body where it stabilizes the conformation of the head with respect to the body. The chain is Small ribosomal subunit protein uS5 from Leuconostoc mesenteroides subsp. mesenteroides (strain ATCC 8293 / DSM 20343 / BCRC 11652 / CCM 1803 / JCM 6124 / NCDO 523 / NBRC 100496 / NCIMB 8023 / NCTC 12954 / NRRL B-1118 / 37Y).